The following is a 401-amino-acid chain: 1-deoxy-D-xylulose 5-phosphate reductoisomerase (401 aa).

The NADPH site is built by Thr-10, Gly-11, Ser-12, Ile-13, Asn-38, and Asn-124. Residue Lys-125 participates in 1-deoxy-D-xylulose 5-phosphate binding. Glu-126 contributes to the NADPH binding site. Residue Asp-150 coordinates Mn(2+). Positions 151, 152, 186, and 209 each coordinate 1-deoxy-D-xylulose 5-phosphate. Residue Glu-152 coordinates Mn(2+). Position 215 (Gly-215) interacts with NADPH. The 1-deoxy-D-xylulose 5-phosphate site is built by Ser-222, Asn-227, Lys-228, and Glu-231. Position 231 (Glu-231) interacts with Mn(2+).

Belongs to the DXR family. Mg(2+) is required as a cofactor. The cofactor is Mn(2+).

The enzyme catalyses 2-C-methyl-D-erythritol 4-phosphate + NADP(+) = 1-deoxy-D-xylulose 5-phosphate + NADPH + H(+). Its pathway is isoprenoid biosynthesis; isopentenyl diphosphate biosynthesis via DXP pathway; isopentenyl diphosphate from 1-deoxy-D-xylulose 5-phosphate: step 1/6. Its function is as follows. Catalyzes the NADPH-dependent rearrangement and reduction of 1-deoxy-D-xylulose-5-phosphate (DXP) to 2-C-methyl-D-erythritol 4-phosphate (MEP). This chain is 1-deoxy-D-xylulose 5-phosphate reductoisomerase, found in Vibrio campbellii (strain ATCC BAA-1116).